Reading from the N-terminus, the 434-residue chain is Glycerol-3-phosphate acyltransferase 3 (434 aa).

The helical transmembrane segment at 14-34 threads the bilayer; it reads WLTLVLGFILLPSVFGVSLGI. A phosphoserine mark is found at Ser68 and Ser77. 2 consecutive transmembrane segments (helical) span residues 137–157 and 161–181; these read ISLR…CVLL and VTLA…VGQL. Positions 229-234 match the HXXXXD motif motif; sequence HTSPID.

This sequence belongs to the 1-acyl-sn-glycerol-3-phosphate acyltransferase family. In terms of tissue distribution, widely expressed. Expressed in liver, kidney, testis, brain, heart, skeletal muscle, thyroid, prostate, thymus and placenta. Also expressed lung and adipose tissue.

Its subcellular location is the endoplasmic reticulum membrane. The enzyme catalyses sn-glycerol 3-phosphate + an acyl-CoA = a 1-acyl-sn-glycero-3-phosphate + CoA. It catalyses the reaction a 1-acyl-sn-glycero-3-phosphate + an acyl-CoA = a 1,2-diacyl-sn-glycero-3-phosphate + CoA. The catalysed reaction is dodecanoyl-CoA + sn-glycerol 3-phosphate = 1-dodecanoyl-sn-glycerol 3-phosphate + CoA. It carries out the reaction sn-glycerol 3-phosphate + hexadecanoyl-CoA = 1-hexadecanoyl-sn-glycero-3-phosphate + CoA. The enzyme catalyses sn-glycerol 3-phosphate + (9Z)-octadecenoyl-CoA = 1-(9Z-octadecenoyl)-sn-glycero-3-phosphate + CoA. It catalyses the reaction (9Z,12Z)-octadecadienoyl-CoA + sn-glycerol 3-phosphate = 1-(9Z,12Z)-octadecadienoyl-sn-glycero-3-phosphate + CoA. The catalysed reaction is 1-tetradecanoyl-sn-glycerol 3-phosphate + (9Z)-octadecenoyl-CoA = 1-tetradecanoyl-2-(9Z)-octadecenoyl-sn-glycero-3-phosphate + CoA. It carries out the reaction 1-hexadecanoyl-sn-glycero-3-phosphate + (9Z)-octadecenoyl-CoA = 1-hexadecanoyl-2-(9Z-octadecenoyl)-sn-glycero-3-phosphate + CoA. The enzyme catalyses 1-(9Z-octadecenoyl)-sn-glycero-3-phosphate + (9Z)-octadecenoyl-CoA = 1,2-di-(9Z-octadecenoyl)-sn-glycero-3-phosphate + CoA. It catalyses the reaction 1-(6Z,9Z,12Z-octadecatrienoyl)-sn-glycero-3-phosphate + (9Z)-octadecenoyl-CoA = (6Z,9Z,12Z)-octadecatrienoyl-2-(9Z)-octadecenoyl-sn-glycero-3-phosphate + CoA. The catalysed reaction is 1-(9Z,12Z,15Z)-octadecatrienoyl-sn-glycero-3-phosphate + (9Z)-octadecenoyl-CoA = 1-(9Z,12Z,15Z)-octadecatrienoyl-2-(9Z)-octadecenoyl-sn-glycero-3-phosphate + CoA. It carries out the reaction 1-(9Z-octadecenoyl)-sn-glycero-3-phosphate + tetradecanoyl-CoA = 1-(9Z)-octadecenoyl-2-tetradecanoyl-sn-glycero-3-phosphate + CoA. The enzyme catalyses 1-(9Z-octadecenoyl)-sn-glycero-3-phosphate + hexadecanoyl-CoA = 1-(9Z)-octadecenoyl-2-hexadecanoyl-sn-glycero-3-phosphate + CoA. It catalyses the reaction 1-(9Z-octadecenoyl)-sn-glycero-3-phosphate + octadecanoyl-CoA = 1-(9Z-octadecenoyl)-2-octadecanoyl-sn-glycero-3-phosphate + CoA. The catalysed reaction is 1-(9Z-octadecenoyl)-sn-glycero-3-phosphate + (9Z,12Z)-octadecadienoyl-CoA = 1-(9Z)-octadecenoyl-2-(9Z,12Z)-octadecadienoyl-sn-glycero-3-phosphate + CoA. It carries out the reaction 1-(5Z,8Z,11Z,14Z-eicosatetraenoyl)-sn-glycero-3-phosphate + (9Z)-octadecenoyl-CoA = 1-(5Z,8Z,11Z,14Z)-eicosatetraenoyl-2-(9Z)-octadecenoyl-sn-glycero-3-phosphate + CoA. The protein operates within glycerolipid metabolism; triacylglycerol biosynthesis. It functions in the pathway phospholipid metabolism; CDP-diacylglycerol biosynthesis; CDP-diacylglycerol from sn-glycerol 3-phosphate: step 1/3. With respect to regulation, inhibited by N-ethylmaleimide (NEM). In terms of biological role, converts glycerol-3-phosphate to 1-acyl-sn-glycerol-3-phosphate (lysophosphatidic acid or LPA) by incorporating an acyl moiety at the sn-1 position of the glycerol backbone. Also converts LPA into 1,2-diacyl-sn-glycerol-3-phosphate (phosphatidic acid or PA) by incorporating an acyl moiety at the sn-2 position of the glycerol backbone. Protects cells against lipotoxicity. In Homo sapiens (Human), this protein is Glycerol-3-phosphate acyltransferase 3.